The primary structure comprises 320 residues: Geranylgeranyl pyrophosphate synthase (320 aa).

Isopentenyl diphosphate-binding residues include K35, R38, and H67. Mg(2+)-binding residues include D74 and D78. R83 contributes to the dimethylallyl diphosphate binding site. An isopentenyl diphosphate-binding site is contributed by R84. K168, T169, Q206, K223, and K233 together coordinate dimethylallyl diphosphate.

It belongs to the FPP/GGPP synthase family. Requires Mg(2+) as cofactor.

The protein localises to the cytoplasm. It catalyses the reaction isopentenyl diphosphate + dimethylallyl diphosphate = (2E)-geranyl diphosphate + diphosphate. The catalysed reaction is isopentenyl diphosphate + (2E)-geranyl diphosphate = (2E,6E)-farnesyl diphosphate + diphosphate. The enzyme catalyses isopentenyl diphosphate + (2E,6E)-farnesyl diphosphate = (2E,6E,10E)-geranylgeranyl diphosphate + diphosphate. Its pathway is isoprenoid biosynthesis; farnesyl diphosphate biosynthesis; farnesyl diphosphate from geranyl diphosphate and isopentenyl diphosphate: step 1/1. It functions in the pathway isoprenoid biosynthesis; geranyl diphosphate biosynthesis; geranyl diphosphate from dimethylallyl diphosphate and isopentenyl diphosphate: step 1/1. It participates in isoprenoid biosynthesis; geranylgeranyl diphosphate biosynthesis; geranylgeranyl diphosphate from farnesyl diphosphate and isopentenyl diphosphate: step 1/1. In terms of biological role, catalyzes the trans-addition of the 3 molecules of IPP onto DMAPP to form geranylgeranyl pyrophosphate. May be involved in vesicle trafficking and protein sorting. The protein is Geranylgeranyl pyrophosphate synthase (BTS1) of Eremothecium gossypii (strain ATCC 10895 / CBS 109.51 / FGSC 9923 / NRRL Y-1056) (Yeast).